The sequence spans 250 residues: Small ribosomal subunit protein uS3 (250 aa).

Positions 39–111 constitute a KH type-2 domain; the sequence is IRTLIKNNYP…KVQINIFEVK (73 aa).

This sequence belongs to the universal ribosomal protein uS3 family. As to quaternary structure, part of the 30S ribosomal subunit. Forms a tight complex with proteins S10 and S14.

Functionally, binds the lower part of the 30S subunit head. Binds mRNA in the 70S ribosome, positioning it for translation. In Alder yellows phytoplasma, this protein is Small ribosomal subunit protein uS3.